The sequence spans 719 residues: Phosphoribosylformylglycinamidine synthase subunit PurL (719 aa).

The active site involves histidine 47. Tyrosine 50 and lysine 89 together coordinate ATP. Glutamate 91 provides a ligand contact to Mg(2+). Substrate is bound by residues 92–95 (SHNH) and arginine 114. The active-site Proton acceptor is histidine 93. Aspartate 115 contacts Mg(2+). Glutamine 238 lines the substrate pocket. Residue aspartate 266 participates in Mg(2+) binding. 310-312 (ESQ) provides a ligand contact to substrate. Residues aspartate 488 and glycine 525 each coordinate ATP. Asparagine 526 provides a ligand contact to Mg(2+). Position 528 (serine 528) interacts with substrate.

This sequence belongs to the FGAMS family. In terms of assembly, monomer. Part of the FGAM synthase complex composed of 1 PurL, 1 PurQ and 2 PurS subunits.

It localises to the cytoplasm. The enzyme catalyses N(2)-formyl-N(1)-(5-phospho-beta-D-ribosyl)glycinamide + L-glutamine + ATP + H2O = 2-formamido-N(1)-(5-O-phospho-beta-D-ribosyl)acetamidine + L-glutamate + ADP + phosphate + H(+). It functions in the pathway purine metabolism; IMP biosynthesis via de novo pathway; 5-amino-1-(5-phospho-D-ribosyl)imidazole from N(2)-formyl-N(1)-(5-phospho-D-ribosyl)glycinamide: step 1/2. Functionally, part of the phosphoribosylformylglycinamidine synthase complex involved in the purines biosynthetic pathway. Catalyzes the ATP-dependent conversion of formylglycinamide ribonucleotide (FGAR) and glutamine to yield formylglycinamidine ribonucleotide (FGAM) and glutamate. The FGAM synthase complex is composed of three subunits. PurQ produces an ammonia molecule by converting glutamine to glutamate. PurL transfers the ammonia molecule to FGAR to form FGAM in an ATP-dependent manner. PurS interacts with PurQ and PurL and is thought to assist in the transfer of the ammonia molecule from PurQ to PurL. The polypeptide is Phosphoribosylformylglycinamidine synthase subunit PurL (Jannaschia sp. (strain CCS1)).